A 494-amino-acid chain; its full sequence is MSHKYSHPSHSDWEAVIGLEIHVELNTKSKLFSVAPNHFGDEPNTNITEVCTGMPGSLPVLNKEAVRKAVQFGCAIQAEVAKFSKFDRKSYFYPDSPRNFQITQYDQPIVKGGTVIAEVNGKEKSFAVNRVHLEDDAGMLKHFSTFAGVDYNRAGSPLIEIVSEPCIHTPEEAVAYAMAIKAILQYIDASDCNMEEGSLRIDTNISVRLKGEQGLRNKIEIKNMNSFSFMELAIKSEINRQIQAYLSHPTKPHDQIIAQATYRWDPEKQETVLMRRKESADDYRYFPEPDLVPIILTDSYIEEIRQSLPELPLQRERRYTKEMGLSAHQAFALTSDKALADYFEEALKTCSNSRSLSNWLLVEFPGRLKEGGQNVKSINLPPSHIASLINLIEKGTITGKIAKSVADEMVAQPGKDPAEIVAGNPDYQPLNDQNEVERYVDQVLAENNQSIVDYRAGRDKAFAYLVGQVMKLCKGKASPSLVNELLKQKIANLP.

Belongs to the GatB/GatE family. GatB subfamily. As to quaternary structure, heterotrimer of A, B and C subunits.

The enzyme catalyses L-glutamyl-tRNA(Gln) + L-glutamine + ATP + H2O = L-glutaminyl-tRNA(Gln) + L-glutamate + ADP + phosphate + H(+). The catalysed reaction is L-aspartyl-tRNA(Asn) + L-glutamine + ATP + H2O = L-asparaginyl-tRNA(Asn) + L-glutamate + ADP + phosphate + 2 H(+). Functionally, allows the formation of correctly charged Asn-tRNA(Asn) or Gln-tRNA(Gln) through the transamidation of misacylated Asp-tRNA(Asn) or Glu-tRNA(Gln) in organisms which lack either or both of asparaginyl-tRNA or glutaminyl-tRNA synthetases. The reaction takes place in the presence of glutamine and ATP through an activated phospho-Asp-tRNA(Asn) or phospho-Glu-tRNA(Gln). This is Aspartyl/glutamyl-tRNA(Asn/Gln) amidotransferase subunit B from Protochlamydia amoebophila (strain UWE25).